A 1243-amino-acid polypeptide reads, in one-letter code: Plasma membrane calcium-transporting ATPase 2 (1243 aa).

A compositionally biased stretch (polar residues) spans 1-13; that stretch reads MGDMTNSDFYSKN. The interval 1 to 24 is disordered; it reads MGDMTNSDFYSKNQRNESSHGGEF. Residues 1 to 94 are Cytoplasmic-facing; it reads MGDMTNSDFY…NFIPPKKPKT (94 aa). A phosphoserine mark is found at Ser-18 and Ser-27. A helical membrane pass occupies residues 95–115; that stretch reads FLQLVWEALQDVTLIILEIAA. The Extracellular portion of the chain corresponds to 116 to 152; sequence IISLGLSFYHPPGESNEGCATAQGGAEDEGEAEAGWI. Residues 153 to 173 traverse the membrane as a helical segment; it reads EGAAILLSVICVVLVTAFNDW. Residues 174 to 390 lie on the Cytoplasmic side of the membrane; sequence SKEKQFRGLQ…KEKSVLQGKL (217 aa). Residues 296 to 308 are compositionally biased toward basic and acidic residues; the sequence is EEKKDKKGVKKGD. Residues 296-382 are disordered; it reads EEKKDKKGVK…KKKANMHKKE (87 aa). Composition is skewed to low complexity over residues 313–330 and 337–356; these read PAAD…ANAS and QDGS…GAAA. Residues 391–410 traverse the membrane as a helical segment; the sequence is TKLAVQIGKAGLVMSAITVI. Topologically, residues 411 to 443 are extracellular; that stretch reads ILVLYFTVDTFVVNKKPWLTECTPVYVQYFVKF. The helical transmembrane segment at 444 to 461 threads the bilayer; that stretch reads FIIGVTVLVVAVPEGLPL. The Cytoplasmic segment spans residues 462 to 875; it reads AVTISLAYSV…MWGRNVYDSI (414 aa). Asp-499 (4-aspartylphosphate intermediate) is an active-site residue. Mg(2+)-binding residues include Asp-820 and Asp-824. Residues 876 to 895 traverse the membrane as a helical segment; that stretch reads SKFLQFQLTVNVVAVIVAFT. Over 896–905 the chain is Extracellular; the sequence is GACITQDSPL. Residues 906–926 form a helical membrane-spanning segment; the sequence is KAVQMLWVNLIMDTFASLALA. Residues 927-946 are Cytoplasmic-facing; that stretch reads TEPPTETLLLRKPYGRNKPL. Residues 947–969 traverse the membrane as a helical segment; sequence ISRTMMKNILGHAVYQLTLIFTL. Over 970–987 the chain is Extracellular; sequence LFVGEKMFQIDSGRNAPL. A helical transmembrane segment spans residues 988 to 1009; that stretch reads HSPPSEHYTIIFNTFVMMQLFN. Over 1010–1028 the chain is Cytoplasmic; sequence EINARKIHGERNVFDGIFR. The helical transmembrane segment at 1029 to 1050 threads the bilayer; the sequence is NPIFCTIVLGTFAIQIVIVQFG. Residues 1051–1060 are Extracellular-facing; the sequence is GKPFSCSPLQ. A helical transmembrane segment spans residues 1061–1082; the sequence is LDQWMWCIFIGLGELVWGQVIA. At 1083–1243 the chain is on the cytoplasmic side; that stretch reads TIPTSRLKFL…SPIHSLETSL (161 aa). Residues Glu-1107, Ile-1116, Asp-1117, Arg-1121, Trp-1130, Phe-1131, and Gln-1138 each carry the phosphoserine modification. The tract at residues 1123 to 1140 is calmodulin-binding subdomain A; that stretch reads LRRGQILWFRGLNRIQTQ. At Thr-1139 the chain carries Phosphothreonine; by PKC. The segment at 1141-1150 is calmodulin-binding subdomain B; it reads IRVVKAFRSS. 8 positions are modified to phosphoserine: Val-1144, Phe-1147, Arg-1148, Tyr-1152, Arg-1161, Thr-1162, Ile-1175, and Ser-1178. Thr-1188 is subject to Phosphothreonine. The tract at residues 1194–1243 is disordered; sequence AALKQNSSPPSSLNKNNSAIDSGINLTTDTSKSATSSSPGSPIHSLETSL. Composition is skewed to low complexity over residues 1196-1211 and 1220-1234; these read LKQN…KNNS and TTDT…SPGS. Ser-1201 is subject to Phosphoserine; by PKA. Position 1211 is a phosphoserine (Ser-1211).

The protein belongs to the cation transport ATPase (P-type) (TC 3.A.3) family. Type IIB subfamily. As to quaternary structure, interacts with PDZD11. Isoforms containing segment B are found in brain, uterus, liver and kidney and in low levels in other tissues. Isoforms containing segment W are found in kidney, uterus, and pancreas. Isoforms containing segment Y are found in pancreas and in low levels in brain and heart. Isoforms containing segment Z are found in brain and heart and isoforms containing segment X are found in low levels in brain. Isoforms containing segment A are found in low levels in heart and small intestine while isoforms containing segment C are found in testis and in low levels in other tissues.

The protein localises to the cell membrane. The protein resides in the synapse. It is found in the apical cell membrane. Its subcellular location is the basolateral cell membrane. It carries out the reaction Ca(2+)(in) + ATP + H2O = Ca(2+)(out) + ADP + phosphate + H(+). In terms of biological role, ATP-driven Ca(2+) ion pump involved in the maintenance of basal intracellular Ca(2+) levels in specialized cells of cerebellar circuit and vestibular and cochlear systems. Uses ATP as an energy source to transport cytosolic Ca(2+) ions across the plasma membrane to the extracellular compartment. Has fast activation and Ca(2+) clearance rate suited to control fast neuronal Ca(2+) dynamics. At parallel fiber to Purkinje neuron synapse, mediates presynaptic Ca(2+) efflux in response to climbing fiber-induced Ca(2+) rise. Provides for fast return of Ca(2+) concentrations back to their resting levels, ultimately contributing to long-term depression induction and motor learning. Plays an essential role in hearing and balance. In cochlear hair cells, shuttles Ca(2+) ions from stereocilia to the endolymph and dissipates Ca(2+) transients generated by the opening of the mechanoelectrical transduction channels. Regulates Ca(2+) levels in the vestibular system, where it contributes to the formation of otoconia. In non-excitable cells, regulates Ca(2+) signaling through spatial control of Ca(2+) ions extrusion and dissipation of Ca(2+) transients generated by store-operated channels. In lactating mammary gland, allows for the high content of Ca(2+) ions in the milk. The polypeptide is Plasma membrane calcium-transporting ATPase 2 (Atp2b2) (Rattus norvegicus (Rat)).